The chain runs to 231 residues: uncharacterized protein (231 aa).

Position 10–34 (V10–V34) interacts with NADP(+). Residue S140 coordinates substrate. The Proton acceptor role is filled by Y153.

This sequence belongs to the short-chain dehydrogenases/reductases (SDR) family.

This is an uncharacterized protein from Staphylococcus aureus (strain MW2).